A 21-amino-acid polypeptide reads, in one-letter code: Trypsin (21 aa).

This sequence belongs to the peptidase S1 family.

It is found in the secreted. The protein localises to the extracellular space. The catalysed reaction is Preferential cleavage: Arg-|-Xaa, Lys-|-Xaa.. The chain is Trypsin from Apis mellifera scutellata (Africanized honey bee).